We begin with the raw amino-acid sequence, 68 residues long: DNA-directed RNA polymerase subunit omega (68 aa).

The protein belongs to the RNA polymerase subunit omega family. The RNAP catalytic core consists of 2 alpha, 1 beta, 1 beta' and 1 omega subunit. When a sigma factor is associated with the core the holoenzyme is formed, which can initiate transcription.

It carries out the reaction RNA(n) + a ribonucleoside 5'-triphosphate = RNA(n+1) + diphosphate. Its function is as follows. Promotes RNA polymerase assembly. Latches the N- and C-terminal regions of the beta' subunit thereby facilitating its interaction with the beta and alpha subunits. The chain is DNA-directed RNA polymerase subunit omega from Trichlorobacter lovleyi (strain ATCC BAA-1151 / DSM 17278 / SZ) (Geobacter lovleyi).